A 178-amino-acid polypeptide reads, in one-letter code: ATP synthase subunit b (178 aa).

A helical transmembrane segment spans residues 11 to 31 (IIPEPVEIVVGLVAFLLLLFV).

It belongs to the ATPase B chain family. As to quaternary structure, F-type ATPases have 2 components, F(1) - the catalytic core - and F(0) - the membrane proton channel. F(1) has five subunits: alpha(3), beta(3), gamma(1), delta(1), epsilon(1). F(0) has three main subunits: a(1), b(2) and c(10-14). The alpha and beta chains form an alternating ring which encloses part of the gamma chain. F(1) is attached to F(0) by a central stalk formed by the gamma and epsilon chains, while a peripheral stalk is formed by the delta and b chains.

It is found in the cell membrane. In terms of biological role, f(1)F(0) ATP synthase produces ATP from ADP in the presence of a proton or sodium gradient. F-type ATPases consist of two structural domains, F(1) containing the extramembraneous catalytic core and F(0) containing the membrane proton channel, linked together by a central stalk and a peripheral stalk. During catalysis, ATP synthesis in the catalytic domain of F(1) is coupled via a rotary mechanism of the central stalk subunits to proton translocation. Functionally, component of the F(0) channel, it forms part of the peripheral stalk, linking F(1) to F(0). The polypeptide is ATP synthase subunit b (Saccharopolyspora erythraea (strain ATCC 11635 / DSM 40517 / JCM 4748 / NBRC 13426 / NCIMB 8594 / NRRL 2338)).